The following is a 161-amino-acid chain: Cystatin cpi-2 (161 aa).

Positions 1–25 are cleaved as a signal peptide; that stretch reads MMSTMSIKEGLLVILLSLFLFDTTA. Residues 76–78 carry the Important for interaction with host LGMN motif; it reads SND. N-linked (GlcNAc...) asparagine glycosylation occurs at N89. The short motif at 93-97 is the Secondary area of contact element; it reads QVVAG. C111 and C124 are oxidised to a cystine.

The protein belongs to the cystatin family.

Functionally, cysteine protease inhibitor which inhibits members of the peptidase C1 family. Also acts as an asparaginyl endopeptidase inhibitor. In the human host, inhibits CTSL/cathepsin L, CTSS/cathepsin S, CTSB/cathepsin B and asparaginyl endopeptidase LGMN/AEP which may cause defects in both antigen and MHC class II invariant chain CD74/Ii processing. This chain is Cystatin cpi-2, found in Brugia malayi (Filarial nematode worm).